Consider the following 379-residue polypeptide: Dihydroorotate dehydrogenase (quinone) (379 aa).

FMN is bound by residues 79-83 (AGCDK) and A103. K83 serves as a coordination point for substrate. 128–131 (NRLG) contributes to the substrate binding site. Residues N160 and N193 each contribute to the FMN site. N193 is a binding site for substrate. The active-site Nucleophile is the S196. Residue N198 participates in substrate binding. Residues K231 and T259 each contribute to the FMN site. 260–261 (NT) provides a ligand contact to substrate. FMN contacts are provided by residues G289, G318, and 339–340 (YT).

The protein belongs to the dihydroorotate dehydrogenase family. Type 2 subfamily. As to quaternary structure, monomer. It depends on FMN as a cofactor.

The protein resides in the cell membrane. The enzyme catalyses (S)-dihydroorotate + a quinone = orotate + a quinol. The protein operates within pyrimidine metabolism; UMP biosynthesis via de novo pathway; orotate from (S)-dihydroorotate (quinone route): step 1/1. Its function is as follows. Catalyzes the conversion of dihydroorotate to orotate with quinone as electron acceptor. The sequence is that of Dihydroorotate dehydrogenase (quinone) from Crocosphaera subtropica (strain ATCC 51142 / BH68) (Cyanothece sp. (strain ATCC 51142)).